The following is a 131-amino-acid chain: Small ribosomal subunit protein bS6 (131 aa).

Positions 98 to 131 are disordered; the sequence is EASPMVKAKDERRERRDDFANETADDAEAGDSEE. A compositionally biased stretch (basic and acidic residues) spans 104 to 116; that stretch reads KAKDERRERRDDF. Positions 120–131 are enriched in acidic residues; the sequence is TADDAEAGDSEE.

Belongs to the bacterial ribosomal protein bS6 family.

Binds together with bS18 to 16S ribosomal RNA. The chain is Small ribosomal subunit protein bS6 from Salmonella dublin (strain CT_02021853).